Reading from the N-terminus, the 324-residue chain is Uric acid degradation bifunctional protein TTL (324 aa).

Position 2 is an N-acetylalanine (alanine 2). The required for BRI1-binding stretch occupies residues 2 to 29 (AMEIGEDEWKVCCGSSEFAKQMSTSGPL). The OHCU decarboxylase stretch occupies residues 2 to 161 (AMEIGEDEWK…LRMAKLFSDK (160 aa)). Histidine 58 acts as the Proton donor; for OHCU decarboxylase activity in catalysis. Histidine 58, proline 59, glutamate 80, phenylalanine 111, isoleucine 113, and alanine 115 together coordinate (S)-allantoin. Residues 178–324 (KPQDRLRIIG…PFSFSTYRGS (147 aa)) form an HIU hydrolase region. The Internal peroxisomal targeting signal (PTS2) signature appears at 182–190 (RLRIIGGHL).

This sequence in the N-terminal section; belongs to the OHCU decarboxylase family. In the C-terminal section; belongs to the transthyretin family. 5-hydroxyisourate hydrolase subfamily. Homodimer. Forms tetramers. Interacts with BRI1 in a kinase-dependent manner. Interacts with B1L. Post-translationally, phosphorylated by BRI1 in vitro. Expressed ubiquitously with highest levels in flowers buds and elongating inflorescences. As to expression, mainly expressed in stems and leaves, and, to a lower extent, in flowers, flower buds and seedlings. In terms of tissue distribution, strongly expressed in flower buds and leaves, to a lower extent in stems, and at low levels in seedlings and flowers.

Its subcellular location is the cell membrane. It is found in the peroxisome. It localises to the cytoplasm. The protein resides in the cytosol. It carries out the reaction 5-hydroxyisourate + H2O = 5-hydroxy-2-oxo-4-ureido-2,5-dihydro-1H-imidazole-5-carboxylate + H(+). It catalyses the reaction 5-hydroxy-2-oxo-4-ureido-2,5-dihydro-1H-imidazole-5-carboxylate + H(+) = (S)-allantoin + CO2. Its pathway is purine metabolism; urate degradation; (S)-allantoin from urate: step 2/3. The protein operates within purine metabolism; urate degradation; (S)-allantoin from urate: step 3/3. In terms of biological role, involved in the last two steps of the degradation of uric acid, i.e. the hydrolysis of 5-hydroxyisourate (HIU) to 2-oxo-4-hydroxy-4-carboxy-5-ureidoimidazoline (OHCU) and its stereoselective decarboxylation to (S)-allantoin, a major ureide compound. Might function as a negative regulator to modulate brassinosteroid-mediated plant growth. Together with B1L, prevents plant growth and development, but by opposition to B1L, negatively regulates cold tolerance, probably in a brassinosteroid (BR) and allantoin-dependent manner. This Arabidopsis thaliana (Mouse-ear cress) protein is Uric acid degradation bifunctional protein TTL.